The sequence spans 100 residues: Urease subunit gamma (100 aa).

This sequence belongs to the urease gamma subunit family. Heterotrimer of UreA (gamma), UreB (beta) and UreC (alpha) subunits. Three heterotrimers associate to form the active enzyme.

The protein localises to the cytoplasm. It catalyses the reaction urea + 2 H2O + H(+) = hydrogencarbonate + 2 NH4(+). The protein operates within nitrogen metabolism; urea degradation; CO(2) and NH(3) from urea (urease route): step 1/1. This is Urease subunit gamma from Rhodococcus opacus (strain B4).